Here is an 84-residue protein sequence, read N- to C-terminus: Delta-thalatoxin-Hhe1a (84 aa).

The first 19 residues, Met-1–Ala-19, serve as a signal peptide directing secretion. Residues Met-20 to Ala-33 constitute a propeptide that is removed on maturation. 3 disulfide bridges follow: Cys-38–Cys-78, Cys-40–Cys-68, and Cys-61–Cys-79.

This sequence belongs to the sea anemone sodium channel inhibitory toxin family. Type II subfamily.

The protein resides in the secreted. The protein localises to the nematocyst. Binds specifically to the voltage-gated sodium channel (Nav) and delays its inactivation. The protein is Delta-thalatoxin-Hhe1a of Heterodactyla hemprichii (Hemprich's sea anemone).